The sequence spans 513 residues: ATP synthase subunit alpha (513 aa).

Residue 169-176 (GDRQTGKT) participates in ATP binding.

Belongs to the ATPase alpha/beta chains family. As to quaternary structure, F-type ATPases have 2 components, CF(1) - the catalytic core - and CF(0) - the membrane proton channel. CF(1) has five subunits: alpha(3), beta(3), gamma(1), delta(1), epsilon(1). CF(0) has three main subunits: a(1), b(2) and c(9-12). The alpha and beta chains form an alternating ring which encloses part of the gamma chain. CF(1) is attached to CF(0) by a central stalk formed by the gamma and epsilon chains, while a peripheral stalk is formed by the delta and b chains.

Its subcellular location is the cell inner membrane. It carries out the reaction ATP + H2O + 4 H(+)(in) = ADP + phosphate + 5 H(+)(out). Functionally, produces ATP from ADP in the presence of a proton gradient across the membrane. The alpha chain is a regulatory subunit. The sequence is that of ATP synthase subunit alpha from Haemophilus influenzae (strain 86-028NP).